Here is a 567-residue protein sequence, read N- to C-terminus: SRSF protein kinase 3 (567 aa).

Residues 1 to 16 are compositionally biased toward gly residues; the sequence is MSASTGGGGDSGGSGG. The interval 1–36 is disordered; sequence MSASTGGGGDSGGSGGSSSSSQASCGPESSGSELAL. Residues 17–32 show a composition bias toward low complexity; it reads SSSSSQASCGPESSGS. Position 50 is a phosphoserine (Ser50). A Protein kinase domain is found at 79–565; that stretch reads YHVVRKLGWG…AADCLQHPWL (487 aa). Residues 85–93 and Lys108 each bind ATP; that span reads LGWGHFSTV. The active-site Proton acceptor is Asp212. 2 disordered regions span residues 238 to 283 and 298 to 351; these read QQAG…RLLE and ATQA…SQTS. Residues 248–258 are compositionally biased toward polar residues; sequence SIVSTAPQEVL. A compositionally biased stretch (basic residues) spans 264–279; sequence SKNKRKKMRRKRKQQK. The segment covering 327-348 has biased composition (low complexity); sequence AGPSPASSSPAPGGGRSLSAGS. Ser330 is subject to Phosphoserine.

It belongs to the protein kinase superfamily. CMGC Ser/Thr protein kinase family. As to expression, expressed in skeletal and heart muscle. Also expressed in the fetal brain.

The protein localises to the nucleus. It localises to the cytoplasm. It catalyses the reaction L-seryl-[protein] + ATP = O-phospho-L-seryl-[protein] + ADP + H(+). The enzyme catalyses L-threonyl-[protein] + ATP = O-phospho-L-threonyl-[protein] + ADP + H(+). Its function is as follows. Serine/arginine-rich protein-specific kinase which specifically phosphorylates its substrates at serine residues located in regions rich in arginine/serine dipeptides, known as RS domains. Phosphorylates the SR splicing factor SRSF1 and the lamin-B receptor (LBR) in vitro. Required for normal muscle development. This chain is SRSF protein kinase 3 (SRPK3), found in Homo sapiens (Human).